Consider the following 296-residue polypeptide: Homeobox protein SIX2 (296 aa).

Residues 124 to 183 (GEETSYCFKEKSRSVLREWYAHNPYPSPREKRELAEATGLTTTQVSNWFKNRRQRDRAAE) constitute a DNA-binding region (homeobox). The interval 168 to 284 (VSNWFKNRRQ…HHHSLQDSIL (117 aa)) is disordered. Residues 179–190 (DRAAEAKERENS) are compositionally biased toward basic and acidic residues. 2 stretches are compositionally biased toward low complexity: residues 191–206 (ENSN…SSLN) and 228–237 (HSSSSPALLL). The span at 254-264 (PPGPSAVPVPV) shows a compositional bias: pro residues.

It belongs to the SIX/Sine oculis homeobox family. Interacts with TCF7L2; in a canonical Wnt signaling independent manner; prevents transcription of differentiation genes in cap mesenchyme. Interacts with OSR1; form a strong repressor complex with TCF7L2, TLE2 and TLE3 to prevent the activation of Wnt/beta-catenin target genes in the cap mesenchyme. Interacts with HOXA11, EYA1 and EYA3. In terms of tissue distribution, expressed in phalangeal tendons, in smooth muscle and in head and body mesenchyme.

The protein localises to the nucleus. In terms of biological role, transcription factor that plays an important role in the development of several organs, including kidney, skull and stomach. During kidney development, maintains cap mesenchyme multipotent nephron progenitor cells in an undifferentiated state by opposing the inductive signals emanating from the ureteric bud and cooperates with WNT9B to promote renewing progenitor cells proliferation. Acts through its interaction with TCF7L2 and OSR1 in a canonical Wnt signaling independent manner preventing transcription of differentiation genes in cap mesenchyme such as WNT4. Also acts independently of OSR1 to activate expression of many cap mesenchyme genes, including itself, GDNF and OSR1. During craniofacial development plays a role in growth and elongation of the cranial base through regulation of chondrocyte differentiation. During stomach organogenesis, controls pyloric sphincter formation and mucosal growth through regulation of a gene network including NKX2-5, BMPR1B, BMP4, SOX9 and GREM1. During branchial arch development, acts to mediate HOXA2 control over the insulin-like growth factor pathway. May also be involved in limb tendon and ligament development. Plays a role in cell proliferation and migration. The chain is Homeobox protein SIX2 (Six2) from Mus musculus (Mouse).